We begin with the raw amino-acid sequence, 439 residues long: UPF0489 protein C5orf22 homolog (439 aa).

Positions 163 to 219 (TTKLENGQSGAKIPKAAQTQDDMQSKADTPCTSSSQPPDGSAASGNISETAKKKADD) are disordered. Residues 179 to 211 (AQTQDDMQSKADTPCTSSSQPPDGSAASGNISE) are compositionally biased toward polar residues.

The protein belongs to the UPF0489 family.

This chain is UPF0489 protein C5orf22 homolog, found in Danio rerio (Zebrafish).